Consider the following 146-residue polypeptide: MTLKLHDLRPARGSKIARTRVGRGDGSKGKTAGRGTKGTRARKQVPVTFEGGQMPIHMRLPKLKGFRNRFRTEYEIVNVGDINRLFPQGGAVGVDDLVAKGAVRKNALVKVLGDGKLTAKVDVSAHKFSGSARAKITAAGGSATEL.

Residues 1 to 10 (MTLKLHDLRP) are compositionally biased toward basic and acidic residues. The interval 1 to 41 (MTLKLHDLRPARGSKIARTRVGRGDGSKGKTAGRGTKGTRA) is disordered.

The protein belongs to the universal ribosomal protein uL15 family. As to quaternary structure, part of the 50S ribosomal subunit.

Functionally, binds to the 23S rRNA. This Mycobacterium tuberculosis (strain ATCC 25177 / H37Ra) protein is Large ribosomal subunit protein uL15.